The following is a 287-amino-acid chain: Pyridoxal kinase PdxY (287 aa).

Substrate is bound by residues serine 10 and threonine 45 to glutamine 46. ATP contacts are provided by residues aspartate 112, alanine 144, glutamate 149, lysine 182, and arginine 209–valine 212. Aspartate 224 is a binding site for substrate.

This sequence belongs to the pyridoxine kinase family. PdxY subfamily. Homodimer. The cofactor is Mg(2+).

It carries out the reaction pyridoxal + ATP = pyridoxal 5'-phosphate + ADP + H(+). Its pathway is cofactor metabolism; pyridoxal 5'-phosphate salvage; pyridoxal 5'-phosphate from pyridoxal: step 1/1. Pyridoxal kinase involved in the salvage pathway of pyridoxal 5'-phosphate (PLP). Catalyzes the phosphorylation of pyridoxal to PLP. The sequence is that of Pyridoxal kinase PdxY from Escherichia coli O157:H7.